We begin with the raw amino-acid sequence, 305 residues long: Sulfate adenylyltransferase subunit 2 (305 aa).

The protein belongs to the PAPS reductase family. CysD subfamily. In terms of assembly, heterodimer composed of CysD, the smaller subunit, and CysN.

The enzyme catalyses sulfate + ATP + H(+) = adenosine 5'-phosphosulfate + diphosphate. Its pathway is sulfur metabolism; hydrogen sulfide biosynthesis; sulfite from sulfate: step 1/3. Its function is as follows. With CysN forms the ATP sulfurylase (ATPS) that catalyzes the adenylation of sulfate producing adenosine 5'-phosphosulfate (APS) and diphosphate, the first enzymatic step in sulfur assimilation pathway. APS synthesis involves the formation of a high-energy phosphoric-sulfuric acid anhydride bond driven by GTP hydrolysis by CysN coupled to ATP hydrolysis by CysD. The polypeptide is Sulfate adenylyltransferase subunit 2 (Pseudomonas putida (strain ATCC 700007 / DSM 6899 / JCM 31910 / BCRC 17059 / LMG 24140 / F1)).